Here is a 161-residue protein sequence, read N- to C-terminus: Nucleotide-binding protein Ssed_3443 (161 aa).

Belongs to the YajQ family.

Its function is as follows. Nucleotide-binding protein. The polypeptide is Nucleotide-binding protein Ssed_3443 (Shewanella sediminis (strain HAW-EB3)).